A 539-amino-acid polypeptide reads, in one-letter code: CTP synthase (539 aa).

The segment at 1 to 272 (MTLRSKMTKY…AQIILSHFKI (272 aa)) is amidoligase domain. CTP is bound at residue Ser19. Ser19 is a UTP binding site. 20–25 (GLGKGV) contacts ATP. Tyr60 serves as a coordination point for L-glutamine. Residue Asp77 coordinates ATP. Mg(2+) contacts are provided by Asp77 and Glu147. Residues 154-156 (DIE), 193-198 (KSKPTQ), and Lys229 each bind CTP. Residues 193–198 (KSKPTQ) and Lys229 each bind UTP. One can recognise a Glutamine amidotransferase type-1 domain in the interval 298–539 (KILMVGKYVE…SFLRVLIKNN (242 aa)). Gly360 is an L-glutamine binding site. Residue Cys387 is the Nucleophile; for glutamine hydrolysis of the active site. Residues 388-391 (LGFQ), Glu410, and Arg469 contribute to the L-glutamine site. Active-site residues include His514 and Glu516.

It belongs to the CTP synthase family. As to quaternary structure, homotetramer.

The enzyme catalyses UTP + L-glutamine + ATP + H2O = CTP + L-glutamate + ADP + phosphate + 2 H(+). It carries out the reaction L-glutamine + H2O = L-glutamate + NH4(+). The catalysed reaction is UTP + NH4(+) + ATP = CTP + ADP + phosphate + 2 H(+). Its pathway is pyrimidine metabolism; CTP biosynthesis via de novo pathway; CTP from UDP: step 2/2. Allosterically activated by GTP, when glutamine is the substrate; GTP has no effect on the reaction when ammonia is the substrate. The allosteric effector GTP functions by stabilizing the protein conformation that binds the tetrahedral intermediate(s) formed during glutamine hydrolysis. Inhibited by the product CTP, via allosteric rather than competitive inhibition. In terms of biological role, catalyzes the ATP-dependent amination of UTP to CTP with either L-glutamine or ammonia as the source of nitrogen. Regulates intracellular CTP levels through interactions with the four ribonucleotide triphosphates. This chain is CTP synthase, found in Mycoplasmopsis pulmonis (strain UAB CTIP) (Mycoplasma pulmonis).